We begin with the raw amino-acid sequence, 440 residues long: Protein ABHD8 (440 aa).

Residues 123 to 158 (DPAGSDGRSAPGSGSGSGSGSGSGGRRRRARRPKRT) form a disordered region. The segment covering 124–134 (PAGSDGRSAPG) has biased composition (low complexity). The span at 135 to 146 (SGSGSGSGSGSG) shows a compositional bias: gly residues. Residues 147–158 (GRRRRARRPKRT) are compositionally biased toward basic residues. The AB hydrolase-1 domain maps to 178–280 (VLFFIHGVGG…HKVIMINGGG (103 aa)). Residues serine 253, aspartate 371, and histidine 399 each act as charge relay system in the active site.

Belongs to the AB hydrolase superfamily. In terms of assembly, interacts with NLRP3 (via NACHT and LLR domains); this interaction is enhanced in the presence of NLRP3 inflammasome inducers, such as ATP, nigericin, silica, or alum. Interacts with ZDHHC12.

Its subcellular location is the cytoplasm. Functionally, negatively regulates NLRP3-driven inflammation. Promotes NLRP3 degradation through the chaperone-mediated autophagy (CMA) pathway, hence attenuating inflammasome activation and IL1B secretion. Acts by recruiting palmitoyltransferase ZDHHC12 to NLRP3, facilitating NLRP3 palmitoylation and subsequent degradation. The protein is Protein ABHD8 of Macaca fascicularis (Crab-eating macaque).